The primary structure comprises 544 residues: CTP synthase (544 aa).

Residues 1–265 (MARFIFITGG…DKAVLSAFGL (265 aa)) are amidoligase domain. Ser13 contributes to the CTP binding site. Residue Ser13 participates in UTP binding. 14 to 19 (SLGKGL) is a binding site for ATP. Tyr54 lines the L-glutamine pocket. Asp71 contacts ATP. Mg(2+)-binding residues include Asp71 and Glu139. CTP-binding positions include 146–148 (DIE), 186–191 (KTKPTQ), and Lys222. UTP is bound by residues 186 to 191 (KTKPTQ) and Lys222. A Glutamine amidotransferase type-1 domain is found at 291–543 (TIGVVGKYVG…VAAALKQSRL (253 aa)). Gly355 provides a ligand contact to L-glutamine. The active-site Nucleophile; for glutamine hydrolysis is the Cys382. L-glutamine is bound by residues 383 to 386 (LGMQ), Glu406, and Arg471. Active-site residues include His516 and Glu518.

Belongs to the CTP synthase family. As to quaternary structure, homotetramer.

The enzyme catalyses UTP + L-glutamine + ATP + H2O = CTP + L-glutamate + ADP + phosphate + 2 H(+). It catalyses the reaction L-glutamine + H2O = L-glutamate + NH4(+). The catalysed reaction is UTP + NH4(+) + ATP = CTP + ADP + phosphate + 2 H(+). The protein operates within pyrimidine metabolism; CTP biosynthesis via de novo pathway; CTP from UDP: step 2/2. With respect to regulation, allosterically activated by GTP, when glutamine is the substrate; GTP has no effect on the reaction when ammonia is the substrate. The allosteric effector GTP functions by stabilizing the protein conformation that binds the tetrahedral intermediate(s) formed during glutamine hydrolysis. Inhibited by the product CTP, via allosteric rather than competitive inhibition. In terms of biological role, catalyzes the ATP-dependent amination of UTP to CTP with either L-glutamine or ammonia as the source of nitrogen. Regulates intracellular CTP levels through interactions with the four ribonucleotide triphosphates. The chain is CTP synthase from Zymomonas mobilis subsp. mobilis (strain ATCC 31821 / ZM4 / CP4).